The chain runs to 474 residues: HTH-type transcriptional regulator RamB (474 aa).

The HTH cro/C1-type domain occupies 10 to 64; the sequence is VRQLRNERGFSQAALAQMLEISPSYLNQIEHDVRPLTVAVLLRITEVFGVDATFF. Residues 21 to 40 constitute a DNA-binding region (H-T-H motif); sequence QAALAQMLEISPSYLNQIEH.

Belongs to the short-chain fatty acyl-CoA assimilation regulator (ScfR) family.

Its function is as follows. Involved in the control of the glyoxylate cycle. RamB negatively controls the expression of icl expression during growth on acetate as the sole carbon source. The protein is HTH-type transcriptional regulator RamB of Mycobacterium tuberculosis (strain CDC 1551 / Oshkosh).